The following is a 98-amino-acid chain: NADH-ubiquinone oxidoreductase chain 4L (98 aa).

3 consecutive transmembrane segments (helical) span residues 1 to 21 (MASI…GVLI), 26 to 46 (LMST…MMTL), and 59 to 79 (APLI…ALLV).

The protein belongs to the complex I subunit 4L family. In terms of assembly, core subunit of respiratory chain NADH dehydrogenase (Complex I) which is composed of 45 different subunits.

The protein resides in the mitochondrion inner membrane. The enzyme catalyses a ubiquinone + NADH + 5 H(+)(in) = a ubiquinol + NAD(+) + 4 H(+)(out). Its function is as follows. Core subunit of the mitochondrial membrane respiratory chain NADH dehydrogenase (Complex I) which catalyzes electron transfer from NADH through the respiratory chain, using ubiquinone as an electron acceptor. Part of the enzyme membrane arm which is embedded in the lipid bilayer and involved in proton translocation. In Caenolestes fuliginosus (Shrew opossum), this protein is NADH-ubiquinone oxidoreductase chain 4L (MT-ND4L).